The primary structure comprises 604 residues: Elongation factor 4 (604 aa).

Residues 7 to 189 enclose the tr-type G domain; the sequence is KRIRNFCIIA…SVVDRVPPPA (183 aa). GTP-binding positions include 19 to 24 and 136 to 139; these read DHGKST and NKID.

This sequence belongs to the TRAFAC class translation factor GTPase superfamily. Classic translation factor GTPase family. LepA subfamily.

The protein localises to the cell inner membrane. It catalyses the reaction GTP + H2O = GDP + phosphate + H(+). Functionally, required for accurate and efficient protein synthesis under certain stress conditions. May act as a fidelity factor of the translation reaction, by catalyzing a one-codon backward translocation of tRNAs on improperly translocated ribosomes. Back-translocation proceeds from a post-translocation (POST) complex to a pre-translocation (PRE) complex, thus giving elongation factor G a second chance to translocate the tRNAs correctly. Binds to ribosomes in a GTP-dependent manner. This chain is Elongation factor 4, found in Synechococcus sp. (strain CC9311).